We begin with the raw amino-acid sequence, 387 residues long: Protein NDRG3 (387 aa).

Residues 329 to 387 (PSASMTRLVRSRTHSASSSGSMEMPRSRSHTSNAQLQSTSNNSLSNQIQETPHTIELSC) are disordered. Residues 359–377 (TSNAQLQSTSNNSLSNQIQ) are compositionally biased toward low complexity.

Belongs to the NDRG family.

The chain is Protein NDRG3 from Xenopus tropicalis (Western clawed frog).